Reading from the N-terminus, the 339-residue chain is Acyl-CoA dehydrogenase FadE28 (339 aa).

Arg-227, Gln-238, His-295, and Gly-299 together coordinate FAD.

It belongs to the acyl-CoA dehydrogenase family. As to quaternary structure, heterotetramer composed of FadE28 and FadE29. FAD is required as a cofactor.

It carries out the reaction 3-oxochol-4-en-22-oyl-CoA + A = 3-oxochola-4,17-dien-22-oyl-CoA + AH2. The protein operates within steroid metabolism; cholesterol degradation. Its function is as follows. Involved in the third cycle of side chain dehydrogenation in the beta-oxidation of cholesterol catabolism. May play an important role for the initial macrophage invasion, possibly in response to the acidification of phagosome. It contributes partly to the virulence by increasing the efficiency of beta-oxidation. Catalyzes the dehydrogenation of 2'-propanoyl-CoA ester side chains of 3-oxo-4-pregnene-20-carboxyl-CoA (3-OPC-CoA) to yield 3-oxo-4,17-pregnadiene-20-carboxyl-CoA (3-OPDC-CoA). Also able to dehydrogenate steroyl-CoA such as 3-oxo-chol-4-en-24-oyl-CoA (3-OCO-CoA), 1beta-(2'-propanoyl-CoA)-3a-alpha-H-7a-beta-methylhexahydro-4-indanone (indanone-CoA ester), hexahydroindanone and pregenenone. This chain is Acyl-CoA dehydrogenase FadE28 (fadE28), found in Mycobacterium tuberculosis (strain ATCC 25618 / H37Rv).